A 628-amino-acid chain; its full sequence is E3 SUMO-protein ligase PIAS3 (628 aa).

The tract at residues 1 to 200 is interaction with CCAR2; it reads MAELGELKHM…QLRFCLCETS (200 aa). Residues 11 to 45 form the SAP domain; that stretch reads VMSFRVSELQVLLGFAGRNKSGRKHELLAKALHLL. Residues 19-23 carry the LXXLL motif motif; the sequence is LQVLL. Residues K46 and K56 each participate in a glycyl lysine isopeptide (Lys-Gly) (interchain with G-Cter in SUMO2) cross-link. The segment at 72-95 is disordered; that stretch reads PSDLSLLSLPPGTSPVGSPSPLAS. A PINIT domain is found at 115-280; it reads MHPPLPQPVH…SLSVYLVRQL (166 aa). Glycyl lysine isopeptide (Lys-Gly) (interchain with G-Cter in SUMO2) cross-links involve residues K230 and K307. The SP-RING-type zinc finger occupies 312 to 393; that stretch reads PDSEVATTSL…FMEILNSCSD (82 aa). Zn(2+) is bound by residues C343, H345, C366, and C369. The SUMO1-binding stretch occupies residues 450 to 460; sequence LTIESSSDEED. Residues K466 and K482 each participate in a glycyl lysine isopeptide (Lys-Gly) (interchain with G-Cter in SUMO2) cross-link. The interval 573 to 618 is disordered; the sequence is LAPTLGSSHRSATPAPAPGRVSSIVAPGSSLREGHGGPLPSGPSLT.

This sequence belongs to the PIAS family. Binds SUMO1 and UBE2I. Interacts with AR, BCL11A, GFI1, HMGA2, IRF1, MITF, NCOA2, as well as with STAT3, after treatment with IL6, CNTF or OSM and with STAT5, after PRL stimulation. Interacts with PLAG1. Interacts with ZFHX3. Interacts with MTA1. Interacts with CCAR2 (via N-terminus). Interacts with TRIM8. Interacts with PRDM1. Sumoylated. In terms of tissue distribution, widely expressed, with highest levels in lung, kidney and spleen.

It is found in the cytoplasm. Its subcellular location is the nucleus. The protein localises to the nucleus speckle. Its pathway is protein modification; protein sumoylation. Its function is as follows. Functions as an E3-type small ubiquitin-like modifier (SUMO) ligase, stabilizing the interaction between UBE2I and the substrate, and as a SUMO-tethering factor. Plays a crucial role as a transcriptional coregulation in various cellular pathways, including the STAT pathway and the steroid hormone signaling pathway. The effects of this transcriptional coregulation, transactivation or silencing, may vary depending upon the biological context. Enhances the sumoylation of MTA1 and may participate in its paralog-selective sumoylation. Sumoylates CCAR2 which promotes its interaction with SIRT1. Diminishes the sumoylation of ZFHX3 by preventing the colocalization of ZFHX3 with SUMO1 in the nucleus. The polypeptide is E3 SUMO-protein ligase PIAS3 (Pias3) (Rattus norvegicus (Rat)).